We begin with the raw amino-acid sequence, 504 residues long: MSFSVDVLANIAIELQRGIGHQDRFQRLITTLRQVLECDASALLRYDSRQFIPLAIDGLAKDVLGRRFALEGHPRLEAIARAGDVVRFPADSELPDPYDGLIPGQESLKVHACVGLPLFVGQNLIGALTLDGMQPDQFDVFSDEELRLIAALAAGALSNALLIEQLESQNMLPGDATPFEAVKQTQMIGLSPGMTQLKKEIEIVAASDLNVLISGETGTGKELVAKAIHEASPRAVNPLVYLNCAALPESVAESELFGHVKGAFTGAISNRSGKFEMADNGTLFLDEIGELSLALQAKLLRVLQYGDIQRVGDDRSLRVDVRVLAATNRDLREEVLAGRFRADLFHRLSVFPLSVPPLRERGDDVILLAGYFCEQCRLRQGLSRVVLSAGARNLLQHYSFPGNVRELEHAIHRAVVLARATRNGDEVILEAQHFAFPEVTLPPPEAAAVPVVKQNLREATEAFQRETIRQALAQNHHNWAACARMLETDVANLHRLAKRLGLKD.

Residue D57 is modified to 4-aspartylphosphate. The region spanning 187–416 (MIGLSPGMTQ…LEHAIHRAVV (230 aa)) is the Sigma-54 factor interaction domain. ATP contacts are provided by residues 215-222 (GETGTGKE) and 278-287 (ADNGTLFLDE). Positions 479 to 498 (WAACARMLETDVANLHRLAK) form a DNA-binding region, H-T-H motif.

It functions in the pathway nitrogen metabolism; nitric oxide reduction. In terms of biological role, required for the expression of anaerobic nitric oxide (NO) reductase, acts as a transcriptional activator for at least the norVW operon. Activation also requires sigma-54. This Shigella flexneri serotype 5b (strain 8401) protein is Anaerobic nitric oxide reductase transcription regulator NorR.